A 150-amino-acid chain; its full sequence is UPF0178 protein Daro_2879 (150 aa).

Belongs to the UPF0178 family.

In Dechloromonas aromatica (strain RCB), this protein is UPF0178 protein Daro_2879.